A 316-amino-acid polypeptide reads, in one-letter code: Thioredoxin reductase (316 aa).

36-43 (ERGIPGGQ) contacts FAD. A disulfide bond links Cys-135 and Cys-138. 278–287 (DIREKSLRQI) contacts FAD.

This sequence belongs to the class-II pyridine nucleotide-disulfide oxidoreductase family. Homodimer. FAD serves as cofactor.

The protein resides in the cytoplasm. It carries out the reaction [thioredoxin]-dithiol + NADP(+) = [thioredoxin]-disulfide + NADPH + H(+). In Bacillus subtilis (strain 168), this protein is Thioredoxin reductase (trxB).